The chain runs to 643 residues: Inner kinetochore subunit cnp3 (643 aa).

2 disordered regions span residues 55 to 209 and 224 to 386; these read SIHL…AFPD and SIKD…QSDS. Low complexity-rich tracts occupy residues 85 to 97 and 104 to 125; these read AASD…SSSD and DIPS…GSSG. The span at 166-185 shows a compositional bias: basic and acidic residues; it reads DFSRIKASPDRKKFEPRRST. Composition is skewed to polar residues over residues 235–261, 295–304, and 313–322; these read YIQT…PSKQ, LNRSLANNSQ, and KPLQESSINS. Composition is skewed to basic residues over residues 332–341 and 360–370; these read VKRKRGRPRK and GAKKPAIRNAK. Positions 333 to 345 form a DNA-binding region, a.T hook; sequence KRKRGRPRKNKLE.

The protein belongs to the CENP-C/MIF2 family. Component of the inner kinetochore constitutive centromere-associated network (CCAN) (also known as central kinetochore Sim4 complex in fission yeast), which is composed of at least cnl2, cnp3, cnp20, fta1, fta2, fta3, fta4, fta6, fta7, mal2, mhf1, mhf2, mis6, mis15, mis17, sim4 and wip1.

Its subcellular location is the nucleus. The protein localises to the nucleoplasm. Functionally, component of the kinetochore, a multiprotein complex that assembles on centromeric DNA and attaches chromosomes to spindle microtubules, mediating chromosome segregation and sister chromatid segregation during meiosis and mitosis. Component of the inner kinetochore constitutive centromere-associated network (CCAN), which serves as a structural platform for outer kinetochore assembly. The protein is Inner kinetochore subunit cnp3 (cnp3) of Schizosaccharomyces pombe (strain 972 / ATCC 24843) (Fission yeast).